A 68-amino-acid polypeptide reads, in one-letter code: Large ribosomal subunit protein bL33c (68 aa).

This sequence belongs to the bacterial ribosomal protein bL33 family.

It is found in the plastid. This is Large ribosomal subunit protein bL33c from Cuscuta exaltata (Tall dodder).